The chain runs to 218 residues: Adenylate kinase (218 aa).

10–15 serves as a coordination point for ATP; the sequence is GAGKGT. Residues 30–59 form an NMP region; that stretch reads STGDMLRAAVKAGTPLGVEAKKIMDAGALV. AMP contacts are provided by residues T31, R36, 57 to 59, 85 to 88, and Q92; these read ALV and GFPR. The LID stretch occupies residues 122-159; it reads GRRSHTASGRTYHVKYNPPKVEGKDDVTGEPLIQREDD. ATP-binding positions include R123 and 132 to 133; that span reads TY. Residues R156 and R167 each coordinate AMP. G203 serves as a coordination point for ATP.

This sequence belongs to the adenylate kinase family. Monomer.

Its subcellular location is the cytoplasm. It carries out the reaction AMP + ATP = 2 ADP. It participates in purine metabolism; AMP biosynthesis via salvage pathway; AMP from ADP: step 1/1. Its function is as follows. Catalyzes the reversible transfer of the terminal phosphate group between ATP and AMP. Plays an important role in cellular energy homeostasis and in adenine nucleotide metabolism. In Polaromonas sp. (strain JS666 / ATCC BAA-500), this protein is Adenylate kinase.